The following is a 482-amino-acid chain: DNA polymerase II small subunit (482 aa).

This sequence belongs to the DNA polymerase delta/II small subunit family. Heterodimer of a large subunit and a small subunit.

It carries out the reaction DNA(n) + a 2'-deoxyribonucleoside 5'-triphosphate = DNA(n+1) + diphosphate. The enzyme catalyses Exonucleolytic cleavage in the 3'- to 5'-direction to yield nucleoside 5'-phosphates.. In terms of biological role, possesses two activities: a DNA synthesis (polymerase) and an exonucleolytic activity that degrades single-stranded DNA in the 3' to 5' direction. Has a template-primer preference which is characteristic of a replicative DNA polymerase. This Methanothermobacter thermautotrophicus (strain ATCC 29096 / DSM 1053 / JCM 10044 / NBRC 100330 / Delta H) (Methanobacterium thermoautotrophicum) protein is DNA polymerase II small subunit (polB).